Here is a 354-residue protein sequence, read N- to C-terminus: Guanine nucleotide-binding protein G(i) subunit alpha (354 aa).

A lipid anchor (N-myristoyl glycine) is attached at glycine 2. A lipid anchor (S-palmitoyl cysteine) is attached at cysteine 3. The G-alpha domain occupies 32 to 354 (REVKLLLLGA…KNNLKDCGLF (323 aa)). The segment at 35 to 48 (KLLLLGAGESGKST) is G1 motif. GTP contacts are provided by residues 40–47 (GAGESGKS), 175–181 (LRTRVKT), 200–204 (DVGGQ), 269–272 (NKKD), and alanine 326. Mg(2+) contacts are provided by serine 47 and threonine 181. The G2 motif stretch occupies residues 173-181 (DVLRTRVKT). Residues 196 to 205 (FKMFDVGGQR) form a G3 motif region. A G4 motif region spans residues 265–272 (ILFLNKKD). The tract at residues 324–329 (TCATDT) is G5 motif.

Belongs to the G-alpha family. G(i/o/t/z) subfamily. As to quaternary structure, g proteins are composed of 3 units; alpha, beta and gamma. The alpha chain contains the guanine nucleotide binding site.

Its function is as follows. Guanine nucleotide-binding proteins (G proteins) are involved as modulators or transducers in various transmembrane signaling systems. The G(i) proteins are involved in hormonal regulation of adenylate cyclase: they inhibit the cyclase in response to beta-adrenergic stimuli. The chain is Guanine nucleotide-binding protein G(i) subunit alpha from Lymnaea stagnalis (Great pond snail).